The sequence spans 330 residues: Phosphatidylglycerol--prolipoprotein diacylglyceryl transferase (330 aa).

3 consecutive transmembrane segments (helical) span residues 22–42, 57–77, and 97–117; these read LPIR…LVVG, YDIA…YHLA, and IWDG…GAWL. An a 1,2-diacyl-sn-glycero-3-phospho-(1'-sn-glycerol)-binding site is contributed by Arg145. Transmembrane regions (helical) follow at residues 193–213 and 257–277; these read VVQP…FALI and INSF…ILAP.

This sequence belongs to the Lgt family.

Its subcellular location is the cell membrane. The catalysed reaction is L-cysteinyl-[prolipoprotein] + a 1,2-diacyl-sn-glycero-3-phospho-(1'-sn-glycerol) = an S-1,2-diacyl-sn-glyceryl-L-cysteinyl-[prolipoprotein] + sn-glycerol 1-phosphate + H(+). It participates in protein modification; lipoprotein biosynthesis (diacylglyceryl transfer). Functionally, catalyzes the transfer of the diacylglyceryl group from phosphatidylglycerol to the sulfhydryl group of the N-terminal cysteine of a prolipoprotein, the first step in the formation of mature lipoproteins. This chain is Phosphatidylglycerol--prolipoprotein diacylglyceryl transferase, found in Mycobacterium leprae (strain Br4923).